The sequence spans 93 residues: OMEGA-ectatommitoxin(02)-Rm1c (93 aa).

An N-terminal signal peptide occupies residues 1–30 (MKDSYISIVIAYLMVTFILVSSMPIEGEKG). Disulfide bonds link cysteine 39–cysteine 52, cysteine 47–cysteine 68, and cysteine 70–cysteine 79. The EGF-like domain occupies 43–80 (YENYCFNGKCVHVVAQDEPGKPCYSCICDEFYIGERCG).

This sequence belongs to the EGF domain peptide family. In terms of tissue distribution, expressed by the venom gland.

Its subcellular location is the secreted. Ant peptide with probable defensive activity which acts as a potent agonist of the mammalian epidermal growth factor receptor (EGFR). Mimics, both structurally and functionally, vertebrate epidermal growth factor (EGF) peptide hormones. In vivo, intraplantar injection in mice causes long-lasting (several days) hypersensitivity of the injected paw to both mechanical and thermal stimuli. Its long-lasting effect is unusual for venom toxins whose effects are usually immediate. One possible explanation is that it would reduce the duration of a nest attack, discourage future attacks, or enhance the actions of subsequent exposure to other pain-inducing venom peptides. The sequence is that of OMEGA-ectatommitoxin(02)-Rm1c from Rhytidoponera metallica (Australian green-headed ant).